Consider the following 757-residue polypeptide: 17S U2 SnRNP complex component HTATSF1 (757 aa).

2 disordered regions span residues 1 to 54 (MSGN…YEWD) and 80 to 123 (SDGA…KAES). Position 2 is an N-acetylserine (Ser2). Positions 80–94 (SDGASSSTANVQDAN) are enriched in polar residues. Residues 97–123 (AVEEPPQKEVPETPDSKRKGEKRKAES) are compositionally biased toward basic and acidic residues. 2 consecutive RRM domains span residues 134–219 (TNVY…VAKF) and 265–350 (RVVI…AWDG). Residues 260–354 (RLRHERVVIL…AQAWDGTTDY (95 aa)) are U2AF homology motif (UHM). Lys298 carries the N6-acetyllysine modification. Residues 382–757 (GLRRMDSIAG…SSSDDDDDEV (376 aa)) form a mediates interaction with the P-TEFb complex region. The disordered stretch occupies residues 383–417 (LRRMDSIAGSERPGPSRMRHFSEHPSMSNMKAQEA). A phosphoserine mark is found at Ser388, Ser404, Ser408, and Ser410. Residues 407 to 417 (PSMSNMKAQEA) are compositionally biased toward polar residues. A Glycyl lysine isopeptide (Lys-Gly) (interchain with G-Cter in SUMO2) cross-link involves residue Lys431. The interval 432 to 757 (FEKAEEGGES…SSSDDDDDEV (326 aa)) is disordered. Residues Ser441, Ser446, Ser519, and Ser528 each carry the phosphoserine modification. Basic and acidic residues-rich tracts occupy residues 445–483 (ASEK…RALE) and 497–538 (GPER…KKES). Acidic residues predominate over residues 539–551 (EDDDSEEESEEDS). Basic and acidic residues-rich tracts occupy residues 552 to 585 (SEKQ…FPED) and 595 to 609 (TDKS…RVLD). Ser556, Ser560, Ser578, Ser598, Ser604, Ser613, Ser621, Ser645, Ser679, Ser705, Ser724, and Ser749 each carry phosphoserine. Composition is skewed to acidic residues over residues 610–635 (EEGS…EEEV), 643–671 (DDSD…DNDI), and 678–688 (DSDEKEDEEDT). Basic and acidic residues-rich tracts occupy residues 689–709 (DGKK…NEKL) and 716–737 (PNEK…KEDG). Residues 738-749 (SQSTDSSFALSS) show a composition bias toward low complexity.

The protein belongs to the HTATSF1 family. In terms of assembly, component of the 17S U2 SnRNP complex, a ribonucleoprotein complex that contains small nuclear RNA (snRNA) U2 and a number of specific proteins. Within the 17S U2 SnRNP complex, interacts (via UHM region) directly with SF3B1. Component of a complex which is at least composed of HTATSF1/Tat-SF1, the P-TEFb complex components CDK9 and CCNT1, RNA polymerase II, SUPT5H, and NCL/nucleolin. Interacts with GTF2F2/RAP30 and POLR2A. Interacts with TCERG1/CA150. Interacts with (poly-ADP-ribosylated) RPA1; promoting HTATSF1 recruitment to DNA damage sites. Interacts (when phosphorylated) with TOPBP1; promoting recruitment of TOPBP1 to DNA damage sites during S-phase. Post-translationally, phosphorylation at Ser-749 by CK2 during S-phase in response to DNA damage promotes interaction with TOPBP1 and double-strand break (DSB) repair via homologous recombination.

It localises to the nucleus. It is found in the chromosome. Functionally, component of the 17S U2 SnRNP complex of the spliceosome, a large ribonucleoprotein complex that removes introns from transcribed pre-mRNAs. The 17S U2 SnRNP complex (1) directly participates in early spliceosome assembly and (2) mediates recognition of the intron branch site during pre-mRNA splicing by promoting the selection of the pre-mRNA branch-site adenosine, the nucleophile for the first step of splicing. Within the 17S U2 SnRNP complex, HTATSF1 is required to stabilize the branchpoint-interacting stem loop. HTATSF1 is displaced from the 17S U2 SnRNP complex before the stable addition of the 17S U2 SnRNP complex to the spliceosome, destabilizing the branchpoint-interacting stem loop and allowing to probe intron branch site sequences. Also acts as a regulator of transcriptional elongation, possibly by mediating the reciprocal stimulatory effect of splicing on transcriptional elongation. Involved in double-strand break (DSB) repair via homologous recombination in S-phase by promoting the recruitment of TOPBP1 to DNA damage sites. Mechanistically, HTATSF1 is (1) recruited to DNA damage sites in S-phase via interaction with poly-ADP-ribosylated RPA1 and (2) phosphorylated by CK2, promoting recruitment of TOPBP1, thereby facilitating RAD51 nucleofilaments formation and RPA displacement, followed by homologous recombination. The chain is 17S U2 SnRNP complex component HTATSF1 (Htatsf1) from Mus musculus (Mouse).